We begin with the raw amino-acid sequence, 282 residues long: Phosphatidylserine decarboxylase proenzyme (282 aa).

Catalysis depends on charge relay system; for autoendoproteolytic cleavage activity residues Asp-88, His-144, and Ser-247. The active-site Schiff-base intermediate with substrate; via pyruvic acid; for decarboxylase activity is Ser-247. Ser-247 is modified (pyruvic acid (Ser); by autocatalysis).

It belongs to the phosphatidylserine decarboxylase family. PSD-B subfamily. Prokaryotic type I sub-subfamily. Heterodimer of a large membrane-associated beta subunit and a small pyruvoyl-containing alpha subunit. The cofactor is pyruvate. Post-translationally, is synthesized initially as an inactive proenzyme. Formation of the active enzyme involves a self-maturation process in which the active site pyruvoyl group is generated from an internal serine residue via an autocatalytic post-translational modification. Two non-identical subunits are generated from the proenzyme in this reaction, and the pyruvate is formed at the N-terminus of the alpha chain, which is derived from the carboxyl end of the proenzyme. The autoendoproteolytic cleavage occurs by a canonical serine protease mechanism, in which the side chain hydroxyl group of the serine supplies its oxygen atom to form the C-terminus of the beta chain, while the remainder of the serine residue undergoes an oxidative deamination to produce ammonia and the pyruvoyl prosthetic group on the alpha chain. During this reaction, the Ser that is part of the protease active site of the proenzyme becomes the pyruvoyl prosthetic group, which constitutes an essential element of the active site of the mature decarboxylase.

It localises to the cell membrane. It catalyses the reaction a 1,2-diacyl-sn-glycero-3-phospho-L-serine + H(+) = a 1,2-diacyl-sn-glycero-3-phosphoethanolamine + CO2. It functions in the pathway phospholipid metabolism; phosphatidylethanolamine biosynthesis; phosphatidylethanolamine from CDP-diacylglycerol: step 2/2. Catalyzes the formation of phosphatidylethanolamine (PtdEtn) from phosphatidylserine (PtdSer). This Xanthomonas oryzae pv. oryzae (strain MAFF 311018) protein is Phosphatidylserine decarboxylase proenzyme.